Consider the following 145-residue polypeptide: 3-dehydroquinate dehydratase (145 aa).

The active-site Proton acceptor is Tyr-24. Asn-76, His-82, and Asp-89 together coordinate substrate. The active-site Proton donor is His-102. Residues 103–104 (VS) and Arg-113 each bind substrate.

Belongs to the type-II 3-dehydroquinase family. In terms of assembly, homododecamer.

The enzyme catalyses 3-dehydroquinate = 3-dehydroshikimate + H2O. It functions in the pathway metabolic intermediate biosynthesis; chorismate biosynthesis; chorismate from D-erythrose 4-phosphate and phosphoenolpyruvate: step 3/7. Functionally, catalyzes a trans-dehydration via an enolate intermediate. The polypeptide is 3-dehydroquinate dehydratase (Janthinobacterium sp. (strain Marseille) (Minibacterium massiliensis)).